The chain runs to 385 residues: Prophage integrase IntS (385 aa).

Residues 91 to 172 (NSFSAIYKEW…RCGEVFRYAI (82 aa)) enclose the Core-binding (CB) domain. The Tyr recombinase domain maps to 195–373 (KNFPFLPADQ…QYLDKRREMM (179 aa)). Catalysis depends on residues arginine 234, lysine 261, histidine 324, arginine 327, and histidine 350. The O-(3'-phospho-DNA)-tyrosine intermediate role is filled by tyrosine 360.

Belongs to the 'phage' integrase family.

Functionally, integrase is necessary for integration of the phage into the host genome by site-specific recombination. In conjunction with excisionase, integrase is also necessary for excision of the prophage from the host genome. In Escherichia coli (strain K12), this protein is Prophage integrase IntS (intS).